The chain runs to 286 residues: ATP synthase gamma chain (286 aa).

It belongs to the ATPase gamma chain family. As to quaternary structure, F-type ATPases have 2 components, CF(1) - the catalytic core - and CF(0) - the membrane proton channel. CF(1) has five subunits: alpha(3), beta(3), gamma(1), delta(1), epsilon(1). CF(0) has three main subunits: a, b and c.

Its subcellular location is the cell membrane. Its function is as follows. Produces ATP from ADP in the presence of a proton gradient across the membrane. The gamma chain is believed to be important in regulating ATPase activity and the flow of protons through the CF(0) complex. In Ureaplasma parvum serovar 3 (strain ATCC 27815 / 27 / NCTC 11736), this protein is ATP synthase gamma chain.